The following is a 39-amino-acid chain: Mu-theraphotoxin-Ae1a (39 aa).

Intrachain disulfides connect Cys7–Cys21, Cys14–Cys26, and Cys20–Cys33. Residue Phe39 is modified to Phenylalanine amide.

This sequence belongs to the neurotoxin 10 (Hwtx-1) family. 47 subfamily. As to expression, expressed by the venom gland.

It is found in the secreted. Insecticidal toxin that acts, at least partially, by inhibiting insect voltage-gated sodium (NaV) channels of several insect species. The toxin binds to the voltage sensor in NaV channel domain II and inhibits channel opening by shifting the threshold for channel activation to more positive voltages. The toxin binding is sensitive to residues in the S1-S2 loop of the domain II voltage sensor. In vivo, the recombinant toxin causes paralysis and/or death to two dipteran species (Lucilia cuprina and Drosophila melanogaster). In contrast, the toxin does not show paralytic or lethal effect on the cotton bollworm Helicoverpa armigera and the triatomine bug Rhodinius prolixus. The polypeptide is Mu-theraphotoxin-Ae1a (Augacephalus ezendami (Mozambique baboon spider)).